A 665-amino-acid chain; its full sequence is SH3 domain-containing kinase-binding protein 1 (665 aa).

SH3 domains lie at 1-58 (MVEA…EIKK) and 98-157 (RRRR…ELSG). A phosphoserine mark is found at S156, S159, S183, and S230. Residues 159–200 (SDELGISQDEQLSKSSLRETTGSESDGGDSSSTKSEGANGTV) form a disordered region. Low complexity predominate over residues 177 to 195 (ETTGSESDGGDSSSTKSEG). T254 is modified (phosphothreonine). The region spanning 267–328 (KSKDYCKVIF…PDNFVKLLPP (62 aa)) is the SH3 3 domain. Disordered regions lie at residues 328–444 (PDFE…LAGS) and 467–610 (DSVV…AAVE). The span at 355 to 390 (TERKHEIKKIPPERPEMLPNRTEEKERPEREPKLDL) shows a compositional bias: basic and acidic residues. The residue at position 436 (S436) is a Phosphoserine. Residues 469–484 (VVSSTEKLSHPTTSRP) show a composition bias toward polar residues. A compositionally biased stretch (low complexity) spans 491 to 510 (PPSQSLTSSSLSSPDIFDSP). A phosphoserine mark is found at S509, S511, and S521. Over residues 517 to 531 (EEHISLAHRGVDASK) the composition is skewed to basic and acidic residues. A compositionally biased stretch (polar residues) spans 535-546 (KTVTISQVSDNK). Residues 564–582 (APLSSAAPSPLSSSLGTAG) show a composition bias toward low complexity. Position 587 is a phosphoserine (S587). The stretch at 602-664 (AASSQAAVEE…VNDIKKALQS (63 aa)) forms a coiled coil.

In terms of assembly, can self-associate and form homotetramers. Interacts with CD2, F-actin capping protein, PIK3R3, GRB2, EGFR, MET, BLNK, MAP3K4, PDCD6IP, SPRY2, ARHGAP17, ARHGAP27, MAGI2, CRK, BCAR1, SOS1, ASAP1, ARAP3, HIP1R, SYNJ2, INPP5D and STAP1. Interacts with E3 ubiquitin-protein ligases CBL and CBLB, but does not interact with CBLC. Two molecules of SH3KBP1 seem to bind through their respective SH3 1 domain to one molecule of CBLB. The interaction with CBL or CBLB and EGFR is increased upon EGF stimulation. The interaction with CBL is attenuated by PDCD6IP. Interacts (via SH3 domains) with ARAP1. The interaction is independent of EGF and does not affect ARAP1 GTPase-activating activity but is involved in regulating ubiquitination and endocytic trafficking of EGFR. ARAP1 competes with CBL for binding to SH3KBP1 and prevents interaction of CBL with SH3KBP1; this is likely to regulate SH3KBP1-mediated internalization of EGFR. Interacts through its proline-rich region with the SH3 domain of endophilins SH3GL1, SH3GL2 and SH3GL3. The SH3KBP1-endophilin complex seems to associate with a complex containing the phosphorylated receptor (EGFR or MET) and phosphorylated CBL. Probably associates with ASAP1 and phosphorylated EGFR. Probably part of a complex consisting of at least SH3KBP1, ASAP1 and ARAP3. Interacts with focal adhesion kinases PTK2/FAK1 and PTK2B/PYK2, probably as a dimer. Interacts with DAB2 and probably associates with chathrin through its interaction with DAB2. Part of a complex consisting of SH3KBP1, DAB2, and clathrin heavy chain. DAB2 and clathrin dissociate from SH3KBP1 following growth factor treatment, enabling interaction with CBL. Interacts with DDN and probably associates with MAGI2 through its interaction with DDN. Interacts with the SH3 domains of SRC tyrosine-protein kinases SRC, LCK, LYN, FGR, FYN and HCK. Interacts with TRADD, BIRC2, TRAF1, TRAF2 and TNFR1, and the association with a TNFR1-associated complex upon stimulation with TNF-alpha seems to be mediated by SRC. Interacts (via SH3 domains) with SHKBP1 (via PXXXPR motifs). Interaction with CBL is abolished in the presence of SHKBP1. Interacts (via SH3 domains) with ZFP36 (via extreme C-terminal region). Interacts with MAP3K4; this interaction enhances the association with ZFP36. As to quaternary structure, (Microbial infection) Interacts (via SH3 domains) with Chikungunya virus non-structural protein 3 (via C-terminus); this interaction plays a role in initiation of viral replication. Monoubiquitinated by CBL and CBLB after EGF stimulation; probably on its C-terminus. As to expression, ubiquitously expressed. Also expressed in some cancer cell lines.

The protein localises to the cytoplasm. It is found in the cytoskeleton. The protein resides in the cytoplasmic vesicle membrane. Its subcellular location is the synapse. It localises to the synaptosome. The protein localises to the cell junction. It is found in the focal adhesion. Functionally, adapter protein involved in regulating diverse signal transduction pathways. Involved in the regulation of endocytosis and lysosomal degradation of ligand-induced receptor tyrosine kinases, including EGFR and MET/hepatocyte growth factor receptor, through an association with CBL and endophilins. The association with CBL, and thus the receptor internalization, may be inhibited by an interaction with PDCD6IP and/or SPRY2. Involved in regulation of ligand-dependent endocytosis of the IgE receptor. Attenuates phosphatidylinositol 3-kinase activity by interaction with its regulatory subunit. May be involved in regulation of cell adhesion; promotes the interaction between TTK2B and PDCD6IP. May be involved in the regulation of cellular stress response via the MAPK pathways through its interaction with MAP3K4. Is involved in modulation of tumor necrosis factor mediated apoptosis. Plays a role in the regulation of cell morphology and cytoskeletal organization. Required in the control of cell shape and migration. Has an essential role in the stimulation of B cell activation. The polypeptide is SH3 domain-containing kinase-binding protein 1 (SH3KBP1) (Homo sapiens (Human)).